Consider the following 131-residue polypeptide: Snaclec macrovipecetin subunit alpha (131 aa).

Disulfide bonds link C2-C13, C30-C125, and C100-C117. One can recognise a C-type lectin domain in the interval 9 to 126 (HEEHCYKVFR…CEDKNPFICK (118 aa)).

In terms of assembly, heterodimer of subunits alpha and beta; disulfide-linked. As to expression, expressed by the venom gland.

It is found in the secreted. Interferes with one step of hemostasis (modulation of platelet aggregation, or coagulation cascade, for example). This Macrovipera lebetinus (Levantine viper) protein is Snaclec macrovipecetin subunit alpha.